A 331-amino-acid polypeptide reads, in one-letter code: Ribosomal RNA small subunit methyltransferase H (331 aa).

S-adenosyl-L-methionine-binding positions include 39-41 (GGY), Asp-56, Phe-83, Asp-100, and Gln-107.

This sequence belongs to the methyltransferase superfamily. RsmH family.

It is found in the cytoplasm. The catalysed reaction is cytidine(1402) in 16S rRNA + S-adenosyl-L-methionine = N(4)-methylcytidine(1402) in 16S rRNA + S-adenosyl-L-homocysteine + H(+). Its function is as follows. Specifically methylates the N4 position of cytidine in position 1402 (C1402) of 16S rRNA. The protein is Ribosomal RNA small subunit methyltransferase H of Bartonella bacilliformis (strain ATCC 35685 / KC583 / Herrer 020/F12,63).